Reading from the N-terminus, the 359-residue chain is Homoserine dehydrogenase (359 aa).

NAD(+)-binding residues include Ala13, Val15, Val16, and Ala41. NADP(+) is bound at residue Val16. Val16 is an NADPH binding site. The NADPH site is built by Lys60, Thr93, Ser94, and Lys117. Thr93 contributes to the NAD(+) binding site. Thr93 lines the NADP(+) pocket. Lys117 serves as a coordination point for NADP(+). Glu143, Val146, Ala148, and Leu150 together coordinate Na(+). NADP(+)-binding residues include Gly205 and Glu208. Glu208 and Asp219 together coordinate L-homoserine. Lys223 functions as the Proton donor in the catalytic mechanism. A Glycyl lysine isopeptide (Lys-Gly) (interchain with G-Cter in ubiquitin) cross-link involves residue Lys290. NAD(+) is bound at residue Gly340. Gly340 is an NADP(+) binding site. Gly340 serves as a coordination point for NADPH.

The protein belongs to the homoserine dehydrogenase family. In terms of assembly, homodimer. It depends on a metal cation as a cofactor.

It catalyses the reaction L-homoserine + NADP(+) = L-aspartate 4-semialdehyde + NADPH + H(+). The catalysed reaction is L-homoserine + NAD(+) = L-aspartate 4-semialdehyde + NADH + H(+). The protein operates within amino-acid biosynthesis; L-methionine biosynthesis via de novo pathway; L-homoserine from L-aspartate: step 3/3. Its pathway is amino-acid biosynthesis; L-threonine biosynthesis; L-threonine from L-aspartate: step 3/5. Catalyzes the conversion of L-aspartate-beta-semialdehyde (L-Asa) to L-homoserine (L-Hse), the third step in the biosynthesis of amino acids that derive from aspartate (the aspartate family of amino acids), including methioinine and threonine, the latter of which is a precursor to isoleucine; production of homoserine leads to a branch-point in the pathway as it can either be O-phosphorylated for processing to threonine, or O-acylated for processing to methionine. The sequence is that of Homoserine dehydrogenase (HOM6) from Saccharomyces cerevisiae (strain ATCC 204508 / S288c) (Baker's yeast).